We begin with the raw amino-acid sequence, 505 residues long: Poxin-Schlafen (505 aa).

The poxin-like stretch occupies residues 1 to 238 (MAMFYAHAFG…SKEERVDYVL (238 aa)). The active-site Proton donor is His17. Tyr138 functions as the Shared with catalytic histidine of dimeric partner in the catalytic mechanism. Lys142 (proton acceptor; shared with catalytic histidine of dimeric partner) is an active-site residue. Residues 239 to 505 (MKRLESIRHL…PDEWVSHIKF (267 aa)) are schlafen-like.

In the N-terminal section; belongs to the poxin family. This sequence in the C-terminal section; belongs to the Schlafen protein family. Subgroup poxviridae B3 subfamily. As to quaternary structure, homodimer.

The enzyme catalyses 2',3'-cGAMP + H2O = Gp(2'-5')Ap(3') + H(+). Nuclease that is responsible for viral evasion of host cGAS-STING innate immunity. Cleaves 2',3'-cGAMP which is produced by host cGAS following recognition of cytosolic DNA and blocks the subsequent 2',3'-cGAMP-mediated activation of TMEM173/STING, which normally spreads to adjacent cells and activates the interferon and NF-kappa-B immune responses. The sequence is that of Poxin-Schlafen (OPG188) from Bos taurus (Bovine).